The sequence spans 96 residues: Co-chaperonin GroES (96 aa).

It belongs to the GroES chaperonin family. Heptamer of 7 subunits arranged in a ring. Interacts with the chaperonin GroEL.

The protein localises to the cytoplasm. Together with the chaperonin GroEL, plays an essential role in assisting protein folding. The GroEL-GroES system forms a nano-cage that allows encapsulation of the non-native substrate proteins and provides a physical environment optimized to promote and accelerate protein folding. GroES binds to the apical surface of the GroEL ring, thereby capping the opening of the GroEL channel. This chain is Co-chaperonin GroES, found in Idiomarina loihiensis (strain ATCC BAA-735 / DSM 15497 / L2-TR).